The following is a 755-amino-acid chain: Photosystem I P700 chlorophyll a apoprotein A1 (755 aa).

8 consecutive transmembrane segments (helical) span residues 72 to 95 (IFSAHFGHLAVVFIWLSGMYFHGA), 158 to 181 (LYCTAIGGLVMAGLMLFAGWFHYH), 197 to 221 (LNHHLAGLLGLGSLSWAGHQIHVSL), 297 to 315 (TAHHHLAIAVLFIIAGHMY), 352 to 375 (WHAQLAINLAMMGSLSIIVAQHMY), 391 to 417 (LSLFTHHMWIGGFLVVGGAAHGAIFMV), 439 to 461 (AIISHLNWVCIFLGFHSFGLYVH), and 536 to 554 (FMVHHIHAFTIHVTVLILL). [4Fe-4S] cluster-binding residues include Cys578 and Cys587. 2 consecutive transmembrane segments (helical) span residues 594–615 (HVFLGLFWMYNCISVVIFHFSW) and 669–691 (LSAYGLLFLGAHFIWAFSLMFLF). Position 680 (His680) interacts with chlorophyll a'. Positions 688 and 696 each coordinate chlorophyll a. Trp697 is a binding site for phylloquinone. A helical membrane pass occupies residues 729-749 (AVGVAHYLLGGIATTWAFFLA).

Belongs to the PsaA/PsaB family. The PsaA/B heterodimer binds the P700 chlorophyll special pair and subsequent electron acceptors. PSI consists of a core antenna complex that captures photons, and an electron transfer chain that converts photonic excitation into a charge separation. The cyanobacterial PSI reaction center is composed of one copy each of PsaA,B,C,D,E,F,I,J,K,L,M and X, and forms trimeric complexes. The cofactor is PSI electron transfer chain: 5 chlorophyll a, 1 chlorophyll a', 2 phylloquinones and 3 4Fe-4S clusters. PSI core antenna: 90 chlorophyll a, 22 carotenoids, 3 phospholipids and 1 galactolipid. P700 is a chlorophyll a/chlorophyll a' dimer, A0 is one or more chlorophyll a, A1 is one or both phylloquinones and FX is a shared 4Fe-4S iron-sulfur center..

The protein localises to the cellular thylakoid membrane. The catalysed reaction is reduced [plastocyanin] + hnu + oxidized [2Fe-2S]-[ferredoxin] = oxidized [plastocyanin] + reduced [2Fe-2S]-[ferredoxin]. In terms of biological role, psaA and PsaB bind P700, the primary electron donor of photosystem I (PSI), as well as the electron acceptors A0, A1 and FX. PSI is a plastocyanin/cytochrome c6-ferredoxin oxidoreductase, converting photonic excitation into a charge separation, which transfers an electron from the donor P700 chlorophyll pair to the spectroscopically characterized acceptors A0, A1, FX, FA and FB in turn. Oxidized P700 is reduced on the lumenal side of the thylakoid membrane by plastocyanin or cytochrome c6. This is Photosystem I P700 chlorophyll a apoprotein A1 from Thermostichus vulcanus (Synechococcus vulcanus).